Consider the following 525-residue polypeptide: Cytochrome P450 4V2 (525 aa).

Residues 13-33 (LLLWGAASAVSVAGATVLLNI) form a helical membrane-spanning segment. Heme contacts are provided by E329 and C467.

Belongs to the cytochrome P450 family. Heme serves as cofactor.

The protein resides in the endoplasmic reticulum membrane. It carries out the reaction dodecanoate + reduced [NADPH--hemoprotein reductase] + O2 = 12-hydroxydodecanoate + oxidized [NADPH--hemoprotein reductase] + H2O + H(+). The enzyme catalyses tetradecanoate + reduced [NADPH--hemoprotein reductase] + O2 = 14-hydroxytetradecanoate + oxidized [NADPH--hemoprotein reductase] + H2O + H(+). It catalyses the reaction hexadecanoate + reduced [NADPH--hemoprotein reductase] + O2 = 16-hydroxyhexadecanoate + oxidized [NADPH--hemoprotein reductase] + H2O + H(+). The catalysed reaction is (5Z,8Z,11Z,14Z,17Z)-eicosapentaenoate + reduced [NADPH--hemoprotein reductase] + O2 = 20-hydroxy-(5Z,8Z,11Z,14Z,17Z)-eicosapentaenoate + oxidized [NADPH--hemoprotein reductase] + H2O + H(+). It carries out the reaction (4Z,7Z,10Z,13Z,16Z,19Z)-docosahexaenoate + reduced [NADPH--hemoprotein reductase] + O2 = 22-hydroxy-(4Z,7Z,10Z,13Z,16Z,19Z)-docosahexaenoate + oxidized [NADPH--hemoprotein reductase] + H2O + H(+). It functions in the pathway lipid metabolism; fatty acid metabolism. Inhibited by N-hydroxy-N'-(4-n-butyl-2-methylphenyl formamidine)(HET0016) with an IC(50) of 38 nM. Its function is as follows. A cytochrome P450 monooxygenase involved in fatty acid metabolism in the eye. Catalyzes the omega-hydroxylation of polyunsaturated fatty acids (PUFAs) docosahexaenoate (DHA) and its precursor eicosapentaenoate (EPA), and may contribute to the homeostasis of these retinal PUFAs. Omega hydroxylates saturated fatty acids such as laurate, myristate and palmitate, the catalytic efficiency decreasing in the following order: myristate &gt; laurate &gt; palmitate (C14&gt;C12&gt;C16). Mechanistically, uses molecular oxygen inserting one oxygen atom into a substrate, and reducing the second into a water molecule, with two electrons provided by NADPH via cytochrome P450 reductase (CPR; NADPH-ferrihemoprotein reductase). The chain is Cytochrome P450 4V2 (Cyp4v2) from Rattus norvegicus (Rat).